The following is a 539-amino-acid chain: Eukaryotic translation initiation factor 3 subunit L (539 aa).

The region spanning 302–514 (TFSSILLYIQ…IHIADTKVSH (213 aa)) is the PCI domain.

The protein belongs to the eIF-3 subunit L family. In terms of assembly, component of the eukaryotic translation initiation factor 3 (eIF-3) complex.

It localises to the cytoplasm. Functionally, component of the eukaryotic translation initiation factor 3 (eIF-3) complex, which is involved in protein synthesis of a specialized repertoire of mRNAs and, together with other initiation factors, stimulates binding of mRNA and methionyl-tRNAi to the 40S ribosome. The eIF-3 complex specifically targets and initiates translation of a subset of mRNAs involved in cell proliferation. This is Eukaryotic translation initiation factor 3 subunit L from Anopheles gambiae (African malaria mosquito).